A 549-amino-acid polypeptide reads, in one-letter code: Glucose-6-phosphate isomerase (549 aa).

3 positions are modified to N6-acetyllysine: K80, K228, and K234. Catalysis depends on E355, which acts as the Proton donor. Catalysis depends on residues H386 and K514.

This sequence belongs to the GPI family.

The protein localises to the cytoplasm. It catalyses the reaction alpha-D-glucose 6-phosphate = beta-D-fructose 6-phosphate. The protein operates within carbohydrate biosynthesis; gluconeogenesis. Its pathway is carbohydrate degradation; glycolysis; D-glyceraldehyde 3-phosphate and glycerone phosphate from D-glucose: step 2/4. Functionally, catalyzes the reversible isomerization of glucose-6-phosphate to fructose-6-phosphate. This Escherichia coli (strain SMS-3-5 / SECEC) protein is Glucose-6-phosphate isomerase.